The sequence spans 411 residues: Serine--tRNA ligase (411 aa).

L-serine is bound at residue 226–228 (TSE). 257–259 (RKE) serves as a coordination point for ATP. Glu-280 contributes to the L-serine binding site. 344 to 347 (EISS) contacts ATP. L-serine is bound at residue Ser-379.

The protein belongs to the class-II aminoacyl-tRNA synthetase family. Type-1 seryl-tRNA synthetase subfamily. In terms of assembly, homodimer. The tRNA molecule binds across the dimer.

It is found in the cytoplasm. The enzyme catalyses tRNA(Ser) + L-serine + ATP = L-seryl-tRNA(Ser) + AMP + diphosphate + H(+). The catalysed reaction is tRNA(Sec) + L-serine + ATP = L-seryl-tRNA(Sec) + AMP + diphosphate + H(+). The protein operates within aminoacyl-tRNA biosynthesis; selenocysteinyl-tRNA(Sec) biosynthesis; L-seryl-tRNA(Sec) from L-serine and tRNA(Sec): step 1/1. Its function is as follows. Catalyzes the attachment of serine to tRNA(Ser). Is also able to aminoacylate tRNA(Sec) with serine, to form the misacylated tRNA L-seryl-tRNA(Sec), which will be further converted into selenocysteinyl-tRNA(Sec). This is Serine--tRNA ligase from Campylobacter jejuni subsp. jejuni serotype O:23/36 (strain 81-176).